A 205-amino-acid polypeptide reads, in one-letter code: Protein GrpE (205 aa).

The disordered stretch occupies residues 1–40 (MSRKLHEEELTPEGMDAAQNADPAGDPVSENEGALPAAEP).

Belongs to the GrpE family. In terms of assembly, homodimer.

The protein resides in the cytoplasm. Participates actively in the response to hyperosmotic and heat shock by preventing the aggregation of stress-denatured proteins, in association with DnaK and GrpE. It is the nucleotide exchange factor for DnaK and may function as a thermosensor. Unfolded proteins bind initially to DnaJ; upon interaction with the DnaJ-bound protein, DnaK hydrolyzes its bound ATP, resulting in the formation of a stable complex. GrpE releases ADP from DnaK; ATP binding to DnaK triggers the release of the substrate protein, thus completing the reaction cycle. Several rounds of ATP-dependent interactions between DnaJ, DnaK and GrpE are required for fully efficient folding. The protein is Protein GrpE of Acidobacterium capsulatum (strain ATCC 51196 / DSM 11244 / BCRC 80197 / JCM 7670 / NBRC 15755 / NCIMB 13165 / 161).